Consider the following 527-residue polypeptide: Tyrosine-protein kinase TXK (527 aa).

Residues 35-79 (DEELPEKYTQRRRPWLSQLSNKKQSNTGRVQPSKRKPLPPLPPSE) form a disordered region. Residues 51–64 (SQLSNKKQSNTGRV) are compositionally biased toward polar residues. The short motif at 68–73 (KRKPLP) is the Nuclear localization signal element. The SH3 domain occupies 82-142 (EEKIQVKALY…PSNYVTENKI (61 aa)). Tyr91 bears the Phosphotyrosine; by autocatalysis mark. The 97-residue stretch at 150-246 (WYHRNITRNQ…GLMTRLRYPV (97 aa)) folds into the SH2 domain. Positions 271–527 (LAFIKEIGSG…RAVTEIAETW (257 aa)) constitute a Protein kinase domain. ATP is bound by residues 277–285 (IGSGQFGVV) and Lys299. Asp390 acts as the Proton acceptor in catalysis. Tyr420 carries the post-translational modification Phosphotyrosine; by FYN and autocatalysis.

It belongs to the protein kinase superfamily. Tyr protein kinase family. TEC subfamily. Interacts with PARP1 and EEF1A1. Interacts with SH2D2A. Interacts with FYN. Post-translationally, phosphorylated at Tyr-420 by FYN. Autophosphorylation at Tyr-91 is critical for the activation of TXK, leading to the up-regulation of IFN-gamma gene transcription. The cysteine string at the N-terminus is palmitoylated and required for the proper subcellular location. Expressed in T-cells and some myeloid cell lines. Expressed in Th1/Th0 cells with IFN-gamma-producing potential.

The protein localises to the cytoplasm. Its subcellular location is the nucleus. The protein resides in the cell membrane. The catalysed reaction is L-tyrosyl-[protein] + ATP = O-phospho-L-tyrosyl-[protein] + ADP + H(+). With respect to regulation, activated by phosphorylation by FYN. Functionally, non-receptor tyrosine kinase that plays a redundant role with ITK in regulation of the adaptive immune response. Regulates the development, function and differentiation of conventional T-cells and nonconventional NKT-cells. When antigen presenting cells (APC) activate T-cell receptor (TCR), a series of phosphorylation leads to the recruitment of TXK to the cell membrane, where it is phosphorylated at Tyr-420. Phosphorylation leads to TXK full activation. Also contributes to signaling from many receptors and participates in multiple downstream pathways, including regulation of the actin cytoskeleton. Like ITK, can phosphorylate PLCG1, leading to its localization in lipid rafts and activation, followed by subsequent cleavage of its substrates. In turn, the endoplasmic reticulum releases calcium in the cytoplasm and the nuclear activator of activated T-cells (NFAT) translocates into the nucleus to perform its transcriptional duty. Plays a role in the positive regulation of IFNG transcription in T-helper 1 cells as part of an IFNG promoter-binding complex with PARP1 and EEF1A1. Within the complex, phosphorylates both PARP1 and EEF1A1. Also phosphorylates key sites in LCP2 leading to the up-regulation of Th1 preferred cytokine IL-2. Phosphorylates 'Tyr-201' of CTLA4 which leads to the association of PI-3 kinase with the CTLA4 receptor. This Homo sapiens (Human) protein is Tyrosine-protein kinase TXK (TXK).